We begin with the raw amino-acid sequence, 162 residues long: Cyclic pyranopterin monophosphate synthase (162 aa).

Substrate is bound by residues 75-77 and 113-114; these read LCH and ME. Residue Asp-128 is part of the active site.

It belongs to the MoaC family. In terms of assembly, homohexamer; trimer of dimers.

The catalysed reaction is (8S)-3',8-cyclo-7,8-dihydroguanosine 5'-triphosphate = cyclic pyranopterin phosphate + diphosphate. The protein operates within cofactor biosynthesis; molybdopterin biosynthesis. Its function is as follows. Catalyzes the conversion of (8S)-3',8-cyclo-7,8-dihydroguanosine 5'-triphosphate to cyclic pyranopterin monophosphate (cPMP). The sequence is that of Cyclic pyranopterin monophosphate synthase from Burkholderia ambifaria (strain MC40-6).